Reading from the N-terminus, the 213-residue chain is Gas vesicle protein F1 (213 aa).

Belongs to the gas vesicle GvpF/GvpL family. As to quaternary structure, binds GvpA1 in early growth stages; is the only one of GvpF1 to GvpM1 that interacts with GvpA1 in H.volcanii experiments. GvpF to GvpM interact with each other in vitro, and may form multi-subunit complex(es). Interacts with GvpC1 and GvpO1.

Its subcellular location is the gas vesicle. The protein resides in the cytoplasm. Might be involved in preventing aggregation of GvpA1. Proteins GvpF to GvpM might be involved in nucleating gas vesicle formation. A minor component of the gas vesicle, also found in soluble extracts. Gas vesicles are hollow, gas filled proteinaceous nanostructures found in several microbial planktonic microorganisms. They allow positioning of halobacteria at the optimal depth for growth in the poorly aerated, shallow brine pools of their habitat. Functionally, expression of a 9.5 kb p-vac DNA fragment containing 2 divergently transcribed regions (gvpD-gvpE-gvpF-gvpG-gvpH-gvpI-gvpJ-gvpK-gvpL-gvpM and gvpA-gvpC-gvpN-gvpO) allows H.volcanii to produce gas vesicles. A minimal gas vesicle can be made in H.volcanii by gvpA1-gvpO1 plus gvpF1-gvpG1-gvpJ1-gvpK1-gvpL1-gvpM1; lack of enough GvpJ1 prevents formation. The same region restores gas vesicle production in H.halobium without the p-vac locus. The sequence is that of Gas vesicle protein F1 (gvpF11) from Halobacterium salinarum (strain ATCC 700922 / JCM 11081 / NRC-1) (Halobacterium halobium).